The primary structure comprises 32 residues: ilv operon leader peptide (32 aa).

This is ilv operon leader peptide (ilvL) from Edwardsiella tarda.